Reading from the N-terminus, the 356-residue chain is Phosphate acyltransferase (356 aa).

The protein belongs to the PlsX family. Homodimer. Probably interacts with PlsY.

The protein resides in the cytoplasm. It carries out the reaction a fatty acyl-[ACP] + phosphate = an acyl phosphate + holo-[ACP]. The protein operates within lipid metabolism; phospholipid metabolism. In terms of biological role, catalyzes the reversible formation of acyl-phosphate (acyl-PO(4)) from acyl-[acyl-carrier-protein] (acyl-ACP). This enzyme utilizes acyl-ACP as fatty acyl donor, but not acyl-CoA. This is Phosphate acyltransferase from Shigella flexneri serotype 5b (strain 8401).